The primary structure comprises 101 residues: Small ubiquitin-related modifier 1 (101 aa).

S2 carries the N-acetylserine modification. Phosphoserine is present on S2. A Glycyl lysine isopeptide (Lys-Gly) (interchain with G-Cter in SUMO1); alternate cross-link involves residue K7. K7 is covalently cross-linked (Glycyl lysine isopeptide (Lys-Gly) (interchain with G-Cter in SUMO2); alternate). A Phosphoserine modification is found at S9. Glycyl lysine isopeptide (Lys-Gly) (interchain with G-Cter in SUMO2) cross-links involve residues K16, K17, and K23. The interval 16–25 (KKEGEYIKLK) is (Microbial infection) Interaction with Tula hantavirus. The Ubiquitin-like domain occupies 20-97 (EYIKLKVIGQ…IEVYQEQTGG (78 aa)). Residue K25 forms a Glycyl lysine isopeptide (Lys-Gly) (interchain with G-Cter in SUMO1) linkage. A Phosphoserine modification is found at S32. Glycyl lysine isopeptide (Lys-Gly) (interchain with G-Cter in SUMO2) cross-links involve residues K37, K39, K45, and K46. The segment at 37–40 (KVKM) is (Microbial infection) Interaction with Tula hantavirus. G97 participates in a covalent cross-link: Glycyl lysine isopeptide (Gly-Lys) (interchain with K-? in acceptor proteins). The propeptide occupies 98–101 (HSTV).

Belongs to the ubiquitin family. SUMO subfamily. In terms of assembly, covalently attached to KCNB1; UBE2I increases cross-linking with KCNB1 and PIAS1 decreases cross-links with KCNB1. Interacts with SAE2, RANBP2, PIAS1 and PIAS2. Interacts with PRKN. Covalently attached to a number of proteins such as IKFZ1, PML, RANGAP1, HIPK2, SP100, p53, p73-alpha, MDM2, JUN, DNMT3B and TDG. Also interacts with HIF1A, HIPK2, HIPK3, CHD3, EXOSC9, RAD51 and RAD52. Interacts with USP25 (via ts SIM domain); the interaction weakly sumoylates USP25. Interacts with SIMC1, CASP8AP2, RNF111 and SOBP (via SIM domains). Interacts with BHLHE40/DEC1. Interacts with RWDD3. Interacts with UBE2I/UBC9 and this interaction is enhanced in the presence of RWDD3. Interacts with MTA1. Interacts with SENP2. Interacts with HINT1. As to quaternary structure, (Microbial infection) Interacts with Epstein-barr virus BGLF4. (Microbial infection) Interacts (via N-terminus) with Tula hantavirus nucleoprotein. In terms of assembly, (Microbial infection) Interacts (via N-terminus) with Hantaan hantavirus nucleoprotein. Post-translationally, cleavage of precursor form by SENP1 or SENP2 is necessary for function. Polymeric SUMO1 chains undergo polyubiquitination by RNF4.

The protein localises to the nucleus membrane. It localises to the nucleus speckle. The protein resides in the cytoplasm. It is found in the nucleus. Its subcellular location is the PML body. The protein localises to the cell membrane. Ubiquitin-like protein that can be covalently attached to proteins as a monomer or a lysine-linked polymer. Covalent attachment via an isopeptide bond to its substrates requires prior activation by the E1 complex SAE1-SAE2 and linkage to the E2 enzyme UBE2I, and can be promoted by E3 ligases such as PIAS1-4, RANBP2 or CBX4. This post-translational modification on lysine residues of proteins plays a crucial role in a number of cellular processes such as nuclear transport, DNA replication and repair, mitosis and signal transduction. Involved for instance in targeting RANGAP1 to the nuclear pore complex protein RANBP2. Covalently attached to the voltage-gated potassium channel KCNB1; this modulates the gating characteristics of KCNB1. Polymeric SUMO1 chains are also susceptible to polyubiquitination which functions as a signal for proteasomal degradation of modified proteins. May also regulate a network of genes involved in palate development. Covalently attached to ZFHX3. This Homo sapiens (Human) protein is Small ubiquitin-related modifier 1 (SUMO1).